Here is a 367-residue protein sequence, read N- to C-terminus: CCN family member 4 (367 aa).

The N-terminal stretch at 1–22 (MRWFLPWTLAAVTAAAASTVLA) is a signal peptide. The IGFBP N-terminal domain maps to 45 to 118 (RPQFCKWPCE…RYAIGVCAQV (74 aa)). 4 disulfides stabilise this stretch: Cys-49-Cys-73, Cys-53-Cys-75, Cys-55-Cys-76, and Cys-62-Cys-79. Residue Asn-86 is glycosylated (N-linked (GlcNAc...) asparagine). 2 cysteine pairs are disulfide-bonded: Cys-87-Cys-101 and Cys-93-Cys-115. The VWFC domain maps to 121–186 (VGCVLDGVRY…GHCCEQWVCE (66 aa)). Residue Asn-143 is glycosylated (N-linked (GlcNAc...) asparagine). A TSP type-1 domain is found at 215–260 (NCIAYTSPWSPCSTSCGLGVSTRISNVNAQCWPEQESRLCNLRPCD). Disulfide bonds link Cys-273/Cys-310, Cys-290/Cys-324, Cys-301/Cys-340, Cys-304/Cys-342, and Cys-309/Cys-346. One can recognise a CTCK domain in the interval 273–347 (CLAVYQPEAS…NACFCNLSCR (75 aa)). Asn-284 is a glycosylation site (N-linked (GlcNAc...) asparagine). A glycan (N-linked (GlcNAc...) asparagine) is linked at Asn-343.

The protein belongs to the CCN family. In terms of tissue distribution, expressed in heart, kidney, lung, pancreas, placenta, ovary, small intestine and spleen. Isoform 2 is expressed predominantly in scirrhous gastric carcinoma and, weakly in placenta. Overexpression is associated with several cancers including breast cancer and colon tumors. Isoform 2 is overexpressed in scirrhous gastric carcinoma.

The protein localises to the secreted. Functionally, downstream regulator in the Wnt/Frizzled-signaling pathway. Associated with cell survival. Attenuates p53-mediated apoptosis in response to DNA damage through activation of AKT kinase. Up-regulates the anti-apoptotic Bcl-X(L) protein. Adheres to skin and melanoma fibroblasts. In vitro binding to skin fibroblasts occurs through the proteoglycans, decorin and biglycan. The chain is CCN family member 4 from Homo sapiens (Human).